A 265-amino-acid polypeptide reads, in one-letter code: HUWE1-associated protein modifying stress responses (265 aa).

Disordered regions lie at residues 1–22 (MEDKKEEGESEIQEHGPEHWFS), 145–170 (RNSRAPPRLTVVSPNRATPTETGSSV), 195–218 (VRSSTPGSPTHVSGSSNTGRRRNG), and 240–265 (GTRKRTSAQCGDVITDSPTHKRNRMI). Polar residues-rich tracts occupy residues 156–170 (VSPNRATPTETGSSV) and 195–212 (VRSSTPGSPTHVSGSSNT).

Belongs to the HAPSTR1 family. In terms of assembly, oligomer.

The protein localises to the nucleus. It localises to the cytoplasm. In terms of biological role, acts as a central player within a network of stress response pathways promoting cellular adaptability. Functions as a negative regulator of TP53/P53 in the cellular response to telomere erosion and probably also DNA damage. This is HUWE1-associated protein modifying stress responses from Xenopus tropicalis (Western clawed frog).